The sequence spans 209 residues: PRA1 family protein A2 (209 aa).

4 consecutive transmembrane segments (helical) span residues 51 to 72 (LYYY…ALVT), 76 to 98 (ALVG…AASF), 142 to 162 (RWVF…SSCG), and 163 to 183 (LLWV…HASI).

Belongs to the PRA1 family.

The protein localises to the endosome membrane. In terms of biological role, may be involved in both secretory and endocytic intracellular trafficking in the endosomal/prevacuolar compartments. The chain is PRA1 family protein A2 (PRA1A2) from Arabidopsis thaliana (Mouse-ear cress).